A 1370-amino-acid polypeptide reads, in one-letter code: DNA-directed RNA polymerase subunit beta (1370 aa).

Belongs to the RNA polymerase beta chain family. The RNAP catalytic core consists of 2 alpha, 1 beta, 1 beta' and 1 omega subunit. When a sigma factor is associated with the core the holoenzyme is formed, which can initiate transcription.

The enzyme catalyses RNA(n) + a ribonucleoside 5'-triphosphate = RNA(n+1) + diphosphate. DNA-dependent RNA polymerase catalyzes the transcription of DNA into RNA using the four ribonucleoside triphosphates as substrates. The chain is DNA-directed RNA polymerase subunit beta from Bordetella bronchiseptica (strain ATCC BAA-588 / NCTC 13252 / RB50) (Alcaligenes bronchisepticus).